The primary structure comprises 204 residues: Pectinesterase inhibitor 9 (204 aa).

A signal peptide spans 1–23 (MELKNTIFLVILLSITILQSSSA). The N-linked (GlcNAc...) asparagine glycan is linked to Asn26. 2 cysteine pairs are disulfide-bonded: Cys38–Cys47 and Cys106–Cys157.

Belongs to the PMEI family. Binds reversibly to PME3 to inhibit its activity; the stability of the PME3-PMEI9 complex and the inhibition of the pectin methylesterase (PME) activity is pH-dependent, based on protonation status of amino-acids at the complex interface. In terms of tissue distribution, highly expressed in roots and etiolated hypocotyls. Expressed in seedlings, leaves, stems, siliques, floral buds and mature seeds.

It localises to the secreted. The protein resides in the extracellular space. Its subcellular location is the apoplast. Its function is as follows. Pectin methylesterase (PME) inhibitor that probably targets root-expressed PME and PME3 in a moderate pH-dependent manner, mainly in slightly acidic conditions (pH 6.3 and 5.0) and to some extent at pH 7.5; this processus relies on changes in the protonation of amino acids involved in intermolecular and intramolecular interactions. Regulates de-methylesterification of pectins in roots and affects root growth. This is Pectinesterase inhibitor 9 from Arabidopsis thaliana (Mouse-ear cress).